Here is a 227-residue protein sequence, read N- to C-terminus: Myogenin (227 aa).

Positions 82–133 (DRRRAATLREKRRLKKVNEAFEALKRSTLLNPNQRLPKVEILRSAIQYIERL) constitute a bHLH domain. The disordered stretch occupies residues 147–196 (QRELRYRPAAPQPAAPSECGSGSSSCSPEWSTQLEFGTNPADHLLSDDQA). The segment covering 161 to 175 (APSECGSGSSSCSPE) has biased composition (low complexity).

Homodimer and heterodimer. Efficient DNA binding requires dimerization with another bHLH protein.

The protein resides in the nucleus. Its function is as follows. Acts as a transcriptional activator that promotes transcription of muscle-specific target genes and plays a role in muscle differentiation. Induces fibroblasts to differentiate into myoblasts. Probable sequence specific DNA-binding protein. The polypeptide is Myogenin (MYOG) (Gallus gallus (Chicken)).